Here is a 669-residue protein sequence, read N- to C-terminus: Alpha-1,6-mannosylglycoprotein 6-beta-N-acetylglucosaminyltransferase (669 aa).

The Cytoplasmic portion of the chain corresponds to 1 to 7; it reads MRRRHRC. A helical; Signal-anchor for type II membrane protein transmembrane segment spans residues 8-28; that stretch reads VALLFIFSAFITPLGFFYYTI. Topologically, residues 29–669 are lumenal; the sequence is SNESKRYSEE…EQHAICKKCL (641 aa). Asn30, Asn412, Asn437, and Asn626 each carry an N-linked (GlcNAc...) asparagine glycan.

This sequence belongs to the glycosyltransferase 18 family. In terms of tissue distribution, expressed in a complex subset of neurons in larvae and in the spermathecal and pharyngeal-intestinal valves and certain vulval cells of adults.

The protein localises to the golgi apparatus membrane. It carries out the reaction N(4)-{beta-D-GlcNAc-(1-&gt;2)-[beta-D-GlcNAc-(1-&gt;4)]-alpha-D-Man-(1-&gt;3)-[beta-D-GlcNAc-(1-&gt;2)-alpha-D-Man-(1-&gt;6)]-beta-D-Man-(1-&gt;4)-beta-D-GlcNAc-(1-&gt;4)-beta-D-GlcNAc}-L-asparaginyl-[protein] + UDP-N-acetyl-alpha-D-glucosamine = N(4)-{beta-D-GlcNAc-(1-&gt;2)-[beta-D-GlcNAc-(1-&gt;4)]-alpha-D-Man-(1-&gt;3)-[beta-D-GlcNAc-(1-&gt;2)-[beta-D-GlcNAc-(1-&gt;6)]-alpha-D-Man-(1-&gt;6)]-beta-D-Man-(1-&gt;4)-beta-D-GlcNAc-(1-&gt;4)-beta-D-GlcNAc}-L-asparaginyl-[protein] + UDP + H(+). It functions in the pathway protein modification; protein glycosylation. Catalyzes the addition of N-acetylglucosamine (GlcNAc) in beta 1-6 linkage to the alpha-linked mannose of biantennary N-linked oligosaccharides. The polypeptide is Alpha-1,6-mannosylglycoprotein 6-beta-N-acetylglucosaminyltransferase (gly-2) (Caenorhabditis elegans).